The sequence spans 220 residues: tRNA (guanine-N(7)-)-methyltransferase (220 aa).

Residues E44, E69, N96, and D118 each contribute to the S-adenosyl-L-methionine site. Residue D118 is part of the active site. K122 provides a ligand contact to substrate. An interaction with RNA region spans residues 124–129; it reads RHEKRR. Substrate-binding positions include D154 and 191–194; that span reads TEYE.

It belongs to the class I-like SAM-binding methyltransferase superfamily. TrmB family.

It carries out the reaction guanosine(46) in tRNA + S-adenosyl-L-methionine = N(7)-methylguanosine(46) in tRNA + S-adenosyl-L-homocysteine. The protein operates within tRNA modification; N(7)-methylguanine-tRNA biosynthesis. In terms of biological role, catalyzes the formation of N(7)-methylguanine at position 46 (m7G46) in tRNA. The sequence is that of tRNA (guanine-N(7)-)-methyltransferase from Geobacillus sp. (strain WCH70).